The primary structure comprises 134 residues: Aspartate 1-decarboxylase (134 aa).

Residue Ser-25 is the Schiff-base intermediate with substrate; via pyruvic acid of the active site. The residue at position 25 (Ser-25) is a Pyruvic acid (Ser). Thr-57 lines the substrate pocket. Tyr-58 serves as the catalytic Proton donor. 73–75 (GAA) is a substrate binding site.

It belongs to the PanD family. As to quaternary structure, heterooctamer of four alpha and four beta subunits. Pyruvate serves as cofactor. Is synthesized initially as an inactive proenzyme, which is activated by self-cleavage at a specific serine bond to produce a beta-subunit with a hydroxyl group at its C-terminus and an alpha-subunit with a pyruvoyl group at its N-terminus.

It localises to the cytoplasm. The enzyme catalyses L-aspartate + H(+) = beta-alanine + CO2. Its pathway is cofactor biosynthesis; (R)-pantothenate biosynthesis; beta-alanine from L-aspartate: step 1/1. Functionally, catalyzes the pyruvoyl-dependent decarboxylation of aspartate to produce beta-alanine. This is Aspartate 1-decarboxylase from Mycolicibacterium gilvum (strain PYR-GCK) (Mycobacterium gilvum (strain PYR-GCK)).